Consider the following 932-residue polypeptide: MPSLFEKILRTGDRKTLKRLHVYADAINTLEDSFQTFTDAELREETDKLRARHADGESLDDLLPEAFAAVREGSRRTLGMRQFDVQLMGGAALHLGNIAEMKTGEGKTLVATAPAYLNGLSGKGVHIVTTNDYLASYQSELMGRVHRFMGLTSGCILSAQEPSERRLQYAADVTYGTNNEFGFDYLRDNMAWSSEELVQRGHHFAIVDEVDSILIDEARTPLIISGPASGDANRWYGEFAKVVLRLDVDDDYEVDEKKRTVGVLEPGIEKVEDYLGISNLYESANTPLIGFLNNAIKAKELFKRDKDYVILDGEVLIVDEHTGRILAGRRYNEGMHQAIEAKESVEIKAENQTLATVTLQNYFRLYEKLSGMTGTAETEASEFMGTYELGVVAIPTNKPMVRIDQSDLVYKNEVVKFEAVVKDIEERHKEGQPVLVGTTSVEKSEYLSKQLSKLGIKHEVLNAKNHAREASIVAQAGRKGAVTVATNMAGRGTDIMLGGNAEFNAVTELAKRGLDPEETPEEYEAAWAEAYEKAQEATEEEHEEVVELGGLYVLGTERHESRRIDNQLRGRSGRQGDPGESRFYLSLTDDLMRLFNSGAAERLMGRSVMPDDQALESKLVSKAIASAQGQVEGRNAEQRKNVLKYDDVLNRQREAIYGDRRRILEGDDLHEKVQHFLEDTVNESIDATTAEGHAEGWDYKALWSSLGTLYPIGLTADDVAEEVGGLANVTSDVLKREILSDAKLAYQGREEKLGSETIRELERRVVLSVIGRKWQEHLYEMDYLKEGIGLRAMAQRDPLVEYQREGFVMFQAMMGAIREESVGFLFNLEVQVEEAPAASAGVQANQPSALLDRVNGEDAGAEAHASAKPVLNAPGLAEPERPSQLQFTAPDASGEAETRIERRSTAGSAGDSNLPPSARKTNKPAPKRKKRR.

Residues Gln-86, 104-108 (GEGKT), and Asp-494 contribute to the ATP site. The tract at residues 857–932 (EDAGAEAHAS…KPAPKRKKRR (76 aa)) is disordered. The segment covering 905–915 (TAGSAGDSNLP) has biased composition (polar residues). The span at 920-932 (KTNKPAPKRKKRR) shows a compositional bias: basic residues.

Belongs to the SecA family. As to quaternary structure, monomer and homodimer. Part of the essential Sec protein translocation apparatus which comprises SecA, SecYEG and auxiliary proteins SecDF. Other proteins may also be involved.

The protein resides in the cell membrane. Its subcellular location is the cytoplasm. It carries out the reaction ATP + H2O + cellular proteinSide 1 = ADP + phosphate + cellular proteinSide 2.. Its function is as follows. Part of the Sec protein translocase complex. Interacts with the SecYEG preprotein conducting channel. Has a central role in coupling the hydrolysis of ATP to the transfer of proteins into and across the cell membrane, serving as an ATP-driven molecular motor driving the stepwise translocation of polypeptide chains across the membrane. In Renibacterium salmoninarum (strain ATCC 33209 / DSM 20767 / JCM 11484 / NBRC 15589 / NCIMB 2235), this protein is Protein translocase subunit SecA.